We begin with the raw amino-acid sequence, 887 residues long: Alanine--tRNA ligase (887 aa).

Zn(2+) contacts are provided by histidine 563, histidine 567, cysteine 677, and histidine 681.

This sequence belongs to the class-II aminoacyl-tRNA synthetase family. Zn(2+) is required as a cofactor.

The protein resides in the cytoplasm. The enzyme catalyses tRNA(Ala) + L-alanine + ATP = L-alanyl-tRNA(Ala) + AMP + diphosphate. Functionally, catalyzes the attachment of alanine to tRNA(Ala) in a two-step reaction: alanine is first activated by ATP to form Ala-AMP and then transferred to the acceptor end of tRNA(Ala). Also edits incorrectly charged Ser-tRNA(Ala) and Gly-tRNA(Ala) via its editing domain. This is Alanine--tRNA ligase from Dinoroseobacter shibae (strain DSM 16493 / NCIMB 14021 / DFL 12).